We begin with the raw amino-acid sequence, 158 residues long: uncharacterized protein (158 aa).

This is an uncharacterized protein from Ureaplasma parvum serovar 3 (strain ATCC 700970).